Here is a 64-residue protein sequence, read N- to C-terminus: Beta-defensin 2 (64 aa).

The signal sequence occupies residues 1–22 (MRLHHLLLVLFFVVLSAGSGFT). Cystine bridges form between cysteine 31-cysteine 60, cysteine 38-cysteine 53, and cysteine 43-cysteine 61.

It belongs to the beta-defensin family.

It is found in the secreted. Its function is as follows. Has bactericidal activity. The protein is Beta-defensin 2 (DEFB2) of Ovis aries (Sheep).